Here is a 35-residue protein sequence, read N- to C-terminus: Conotoxin Cal6.1c (35 aa).

A propeptide spanning residues 1 to 35 is cleaved from the precursor; sequence GLNRPSKRCLAGSAPCEFHKRSTCCSGHCIIWWCA. 3 cysteine pairs are disulfide-bonded: C9–C25, C16–C29, and C24–C34.

Belongs to the conotoxin O1 superfamily. In terms of tissue distribution, expressed by the venom duct.

The protein resides in the secreted. Its function is as follows. Probable neurotoxin with unknown target. Possibly targets ion channels. The protein is Conotoxin Cal6.1c of Californiconus californicus (California cone).